The chain runs to 197 residues: Probable nicotinate-nucleotide adenylyltransferase (197 aa).

Belongs to the NadD family.

It catalyses the reaction nicotinate beta-D-ribonucleotide + ATP + H(+) = deamido-NAD(+) + diphosphate. It participates in cofactor biosynthesis; NAD(+) biosynthesis; deamido-NAD(+) from nicotinate D-ribonucleotide: step 1/1. Its function is as follows. Catalyzes the reversible adenylation of nicotinate mononucleotide (NaMN) to nicotinic acid adenine dinucleotide (NaAD). This is Probable nicotinate-nucleotide adenylyltransferase from Chlorobium phaeobacteroides (strain DSM 266 / SMG 266 / 2430).